The sequence spans 465 residues: Branched-chain amino acid permease BcaP (465 aa).

The next 13 helical transmembrane spans lie at 35-55 (LLGI…TGAV), 57-77 (AGPG…FAAL), 103-123 (LMAF…VSAV), 133-153 (SFLS…PGAV), 159-179 (LFNL…YLGI), 188-208 (IMVI…AVYV), 216-236 (FMPM…FAFI), 258-278 (GIIF…AIMT), 305-325 (VAGI…LVML), 355-375 (PYVA…LVPL), 380-400 (KLVN…VIVL), 413-432 (CPGV…FLIL), and 437-456 (VTIV…YFLY).

It belongs to the amino acid-polyamine-organocation (APC) superfamily.

It is found in the cell membrane. With respect to regulation, isoleucine uptake is efficiently reduced in the presence of 100-fold excess valine, leucine, alanine, threonine, serine, cysteine, asparagine, and a nonproteinaceous amino acid 4-azaleucine. Functionally, branched-chain amino acid transport system which is involved in the uptake of isoleucine, valine and probably leucine. Can also transport threonine, and is active as a minor serine permease. May be an amino acid permease of rather broad specificity, because several amino acids, albeit at 100-fold excess, are able to prevent isoleucine uptake. Probably does not transport methionine. Together with BraB and BrnQ, plays an important role in the activation of CodY, a branched-chain amino acid-responsive transcriptional regulator that controls the expression of several dozen transcription units in B.subtilis. In Bacillus subtilis (strain 168), this protein is Branched-chain amino acid permease BcaP.